The sequence spans 215 residues: Orotidine 5'-phosphate decarboxylase (215 aa).

Substrate contacts are provided by residues Asp12, Lys34, 60-69 (DFKVADIPNT), Ser117, 170-180 (PGVGAQGGSAA), Gly193, and Arg194. Catalysis depends on Lys62, which acts as the Proton donor.

The protein belongs to the OMP decarboxylase family. Type 1 subfamily. Homodimer.

The catalysed reaction is orotidine 5'-phosphate + H(+) = UMP + CO2. It functions in the pathway pyrimidine metabolism; UMP biosynthesis via de novo pathway; UMP from orotate: step 2/2. Its function is as follows. Catalyzes the decarboxylation of orotidine 5'-monophosphate (OMP) to uridine 5'-monophosphate (UMP). In Methanococcoides burtonii (strain DSM 6242 / NBRC 107633 / OCM 468 / ACE-M), this protein is Orotidine 5'-phosphate decarboxylase.